A 396-amino-acid chain; its full sequence is MVRTQTESSTPPGIPGGSRQGPAMDGTAAEPRPGAGSLQHAQPPPQPRKKRPEDFKFGKILGEGSFSTVVLARELATSREYAIKILEKRHIIKENKVPYVTRERDVMSRLDHPFFVKLYFTFQDDEKLYFGLSYAKNGELLKYIRKIGSFDETCTRFYTAEIVSALEYLHGKGIIHRDLKPENILLNEDMYIQITDFGTAKVLSPESKQARANSFVGTAQYVSPELLTEKSACKSSDLWALGCIIYQLVAGLPPFRAGNEYLIFQKIIKLEYDFPEKFFPKARDLVEKLLVLDATKRLGCEEMEGYGPLKAHPFFESVTWENLHQQTPPKLTAYLPAMSEDDEDCYGNVSWPGWRARQVALGPPCTGLHARAPDPRVICSRKGRVSVPLRQACWWL.

Over residues 1–11 (MVRTQTESSTP) the composition is skewed to polar residues. Positions 1–53 (MVRTQTESSTPPGIPGGSRQGPAMDGTAAEPRPGAGSLQHAQPPPQPRKKRPE) are disordered. Positions 55 to 315 (FKFGKILGEG…YGPLKAHPFF (261 aa)) constitute a Protein kinase domain. ATP is bound by residues 65-67 (SFS) and K84. The segment at 86-130 (LEKRHIIKENKVPYVTRERDVMSRLDHPFFVKLYFTFQDDEKLYF) is PIF-pocket. ATP-binding positions include 133–135 (SYA) and E139. D178 serves as the catalytic Proton acceptor. Residues E182 and D196 each contribute to the ATP site.

It belongs to the protein kinase superfamily. AGC Ser/Thr protein kinase family. PDPK1 subfamily. Post-translationally, phosphorylated on tyrosine and serine/threonine.

It localises to the cytoplasm. It is found in the membrane. It carries out the reaction L-seryl-[protein] + ATP = O-phospho-L-seryl-[protein] + ADP + H(+). The catalysed reaction is L-threonyl-[protein] + ATP = O-phospho-L-threonyl-[protein] + ADP + H(+). Functionally, phosphorylates and activates not only PKB/AKT, but also PKA, PKC-zeta, RPS6KA1 and RPS6KB1. May play a general role in signaling processes and in development. The chain is Putative 3-phosphoinositide-dependent protein kinase 2 from Homo sapiens (Human).